Here is a 422-residue protein sequence, read N- to C-terminus: MNTADLKSFDPEVQSAIDEELGRQRHQIELIASENIVSPAVMAAQGSVMTNKYAEGYPAKRYYGGCEFVDKVEVLAIERAKQLFGCAYANVQPHSGSQANMAAFMAIAPAGSTILGMSLAHGGHLTHGAKVNFSGQIYNAVQYGLNGESERIDFDQVQALAMEHKPAIIVAGASAYSRIIDFAKFREICDAVGAKLVVDMAHFAGLVATGEHPSPFPHADIVTTTTHKTLRGPRGGMILTNDEELAKKINSKIFPGIQGGPLMHVIAAKAVAFKEALSPEFKIYTQQVRKNAVALAEVLVEGGLRIVSGGTDNHLMLVDLTSRDITGKDTEHALERAGLTCNKNAIPNDPRSPFITSGVRLGTPAATTRGFDEEAFRAVGRLIVRVVDAVAASGGAGDPAIEAEVHKEVDALCQKFPIYADI.

(6S)-5,6,7,8-tetrahydrofolate contacts are provided by residues leucine 119 and 123–125; that span reads GHL. Lysine 228 carries the post-translational modification N6-(pyridoxal phosphate)lysine. Residues glutamate 244 and 352–354 each bind (6S)-5,6,7,8-tetrahydrofolate; that span reads SPF.

The protein belongs to the SHMT family. As to quaternary structure, homodimer. Pyridoxal 5'-phosphate serves as cofactor.

The protein resides in the cytoplasm. The catalysed reaction is (6R)-5,10-methylene-5,6,7,8-tetrahydrofolate + glycine + H2O = (6S)-5,6,7,8-tetrahydrofolate + L-serine. It functions in the pathway one-carbon metabolism; tetrahydrofolate interconversion. The protein operates within amino-acid biosynthesis; glycine biosynthesis; glycine from L-serine: step 1/1. Catalyzes the reversible interconversion of serine and glycine with tetrahydrofolate (THF) serving as the one-carbon carrier. This reaction serves as the major source of one-carbon groups required for the biosynthesis of purines, thymidylate, methionine, and other important biomolecules. Also exhibits THF-independent aldolase activity toward beta-hydroxyamino acids, producing glycine and aldehydes, via a retro-aldol mechanism. This chain is Serine hydroxymethyltransferase, found in Magnetococcus marinus (strain ATCC BAA-1437 / JCM 17883 / MC-1).